The sequence spans 530 residues: Bifunctional purine biosynthesis protein PurH (530 aa).

The MGS-like domain occupies M1–V148.

The protein belongs to the PurH family.

The enzyme catalyses (6R)-10-formyltetrahydrofolate + 5-amino-1-(5-phospho-beta-D-ribosyl)imidazole-4-carboxamide = 5-formamido-1-(5-phospho-D-ribosyl)imidazole-4-carboxamide + (6S)-5,6,7,8-tetrahydrofolate. The catalysed reaction is IMP + H2O = 5-formamido-1-(5-phospho-D-ribosyl)imidazole-4-carboxamide. It functions in the pathway purine metabolism; IMP biosynthesis via de novo pathway; 5-formamido-1-(5-phospho-D-ribosyl)imidazole-4-carboxamide from 5-amino-1-(5-phospho-D-ribosyl)imidazole-4-carboxamide (10-formyl THF route): step 1/1. Its pathway is purine metabolism; IMP biosynthesis via de novo pathway; IMP from 5-formamido-1-(5-phospho-D-ribosyl)imidazole-4-carboxamide: step 1/1. In Aliivibrio fischeri (strain MJ11) (Vibrio fischeri), this protein is Bifunctional purine biosynthesis protein PurH.